We begin with the raw amino-acid sequence, 516 residues long: Leucine-rich repeat transmembrane neuronal protein 2 (516 aa).

Positions 1–33 are cleaved as a signal peptide; sequence MGLHFKWPLGAPMLAAIYAMSMVLKMLPALGMA. One can recognise an LRRNT domain in the interval 34 to 61; that stretch reads CPPKCRCEKLLFYCDSQGFHSVPNATDK. Residues 34 to 422 lie on the Extracellular side of the membrane; that stretch reads CPPKCRCEKL…EPDNAIFTQR (389 aa). N57 is a glycosylation site (N-linked (GlcNAc...) asparagine). LRR repeat units lie at residues 63-83, 86-107, 110-131, 134-155, 158-179, 182-203, 206-227, 230-251, 254-275, and 278-299; these read SLGL…QFAS, QLTW…AFQG, KLKE…TFTQ, NLQN…LFYG, KLQT…LFWD, SLEF…GFAG, KLRE…HFLR, SLHT…MEWT, TLEK…VFET, and NLKI…ILNS. N-linked (GlcNAc...) asparagine glycosylation occurs at N126. Residue N243 is glycosylated (N-linked (GlcNAc...) asparagine). The LRRCT domain occupies 311 to 362; it reads NLWECSARICALASWLGSFQGRWEHSILCHSPDHTQGEDILDAVHGFQLCWN. N362 carries an N-linked (GlcNAc...) asparagine glycan. The helical transmembrane segment at 423-443 threads the bilayer; sequence VITGTMALLFSFFFIIFIVFI. Residues 444–516 are Cytoplasmic-facing; it reads SRKCCPPTLR…QQLPYKECEV (73 aa). The Involved in DLG4-binding signature appears at 513–516; the sequence is ECEV.

This sequence belongs to the LRRTM family. In terms of assembly, interacts with DLG4. Interacts with neurexin NRXN1; interaction is mediated by heparan sulfate glycan modification on neurexin. Expressed in neuronal tissues.

The protein localises to the cell membrane. Its subcellular location is the postsynaptic cell membrane. In terms of biological role, involved in the development and maintenance of excitatory synapses in the vertebrate nervous system. Regulates surface expression of AMPA receptors and instructs the development of functional glutamate release sites. Acts as a ligand for the presynaptic receptors NRXN1-A and NRXN1-B. This chain is Leucine-rich repeat transmembrane neuronal protein 2 (LRRTM2), found in Homo sapiens (Human).